A 488-amino-acid polypeptide reads, in one-letter code: Coiled-coil domain-containing protein 77 (488 aa).

The disordered stretch occupies residues Gly21–Arg48. Ser36 is modified (phosphoserine). Lys51 is covalently cross-linked (Glycyl lysine isopeptide (Lys-Gly) (interchain with G-Cter in SUMO2)). 2 coiled-coil regions span residues Ser55 to Leu118 and Lys208 to Cys488. The segment at Phe192 to His213 is disordered.

In Homo sapiens (Human), this protein is Coiled-coil domain-containing protein 77 (CCDC77).